The chain runs to 357 residues: Sulfate/thiosulfate import ATP-binding protein CysA (357 aa).

An ABC transporter domain is found at I3–L237. Residue G35 to T42 participates in ATP binding.

The protein belongs to the ABC transporter superfamily. Sulfate/tungstate importer (TC 3.A.1.6) family. In terms of assembly, the complex is composed of two ATP-binding proteins (CysA), two transmembrane proteins (CysT and CysW) and a solute-binding protein (CysP).

Its subcellular location is the cell inner membrane. The catalysed reaction is sulfate(out) + ATP + H2O = sulfate(in) + ADP + phosphate + H(+). The enzyme catalyses thiosulfate(out) + ATP + H2O = thiosulfate(in) + ADP + phosphate + H(+). Part of the ABC transporter complex CysAWTP involved in sulfate/thiosulfate import. Responsible for energy coupling to the transport system. This is Sulfate/thiosulfate import ATP-binding protein CysA from Neisseria meningitidis serogroup A / serotype 4A (strain DSM 15465 / Z2491).